The sequence spans 258 residues: Ribosome maturation factor RimP (258 aa).

Disordered regions lie at residues 48-88 and 212-258; these read PQRP…PTSA and IFKK…AEND. Residues 215 to 224 are compositionally biased toward basic residues; the sequence is KPQKPGKKPG.

This sequence belongs to the RimP family.

It localises to the cytoplasm. In terms of biological role, required for maturation of 30S ribosomal subunits. The sequence is that of Ribosome maturation factor RimP from Desulfovibrio desulfuricans (strain ATCC 27774 / DSM 6949 / MB).